The sequence spans 460 residues: NADH-ubiquinone oxidoreductase chain 4 (460 aa).

Transmembrane regions (helical) follow at residues 20–42, 61–81, 94–113, 117–139, 148–168, 195–215, 225–245, 258–278, 285–304, 308–330, 351–371, 394–414, and 436–456; these read AKWLWTTSIAQSLVIALASLSWL, PLSTPLLVLTCWLLPLMVLAS, RTYISLLVSLQMFLILAFGA, IMFYIMFEATLLPTLIIITRWGN, TYFLFYTLAGSLPLLVALLLL, LWWAACLLAFLVKMPVYGVHL, PIAGSMILAAVLLKLGGYGMM, LAYPFIVLALWGIIMTGSICL, SLIAYSSVGHMGLVAGGILI, WGFTGAIILMIAHGLASSALFCL, MILPLMTTWWFVASLANLALP, LLLTGLGTLITASYSLYLFLM, and LLITLHLIPIILLILKPELMW.

Belongs to the complex I subunit 4 family.

The protein resides in the mitochondrion membrane. The enzyme catalyses a ubiquinone + NADH + 5 H(+)(in) = a ubiquinol + NAD(+) + 4 H(+)(out). In terms of biological role, core subunit of the mitochondrial membrane respiratory chain NADH dehydrogenase (Complex I) that is believed to belong to the minimal assembly required for catalysis. Complex I functions in the transfer of electrons from NADH to the respiratory chain. The immediate electron acceptor for the enzyme is believed to be ubiquinone. This is NADH-ubiquinone oxidoreductase chain 4 (MT-ND4) from Salmo salar (Atlantic salmon).